The sequence spans 200 residues: 3-isopropylmalate dehydratase small subunit (200 aa).

It belongs to the LeuD family. LeuD type 1 subfamily. In terms of assembly, heterodimer of LeuC and LeuD.

The catalysed reaction is (2R,3S)-3-isopropylmalate = (2S)-2-isopropylmalate. It participates in amino-acid biosynthesis; L-leucine biosynthesis; L-leucine from 3-methyl-2-oxobutanoate: step 2/4. Catalyzes the isomerization between 2-isopropylmalate and 3-isopropylmalate, via the formation of 2-isopropylmaleate. This Vibrio campbellii (strain ATCC BAA-1116) protein is 3-isopropylmalate dehydratase small subunit.